The following is a 445-amino-acid chain: Phosphoglucosamine mutase (445 aa).

Residue Ser-101 is the Phosphoserine intermediate of the active site. Mg(2+)-binding residues include Ser-101, Asp-240, Asp-242, and Asp-244. Ser-101 is subject to Phosphoserine.

This sequence belongs to the phosphohexose mutase family. It depends on Mg(2+) as a cofactor. Post-translationally, activated by phosphorylation.

It carries out the reaction alpha-D-glucosamine 1-phosphate = D-glucosamine 6-phosphate. Functionally, catalyzes the conversion of glucosamine-6-phosphate to glucosamine-1-phosphate. This chain is Phosphoglucosamine mutase, found in Ectopseudomonas mendocina (strain ymp) (Pseudomonas mendocina).